A 132-amino-acid polypeptide reads, in one-letter code: Transcription antitermination protein NusB (132 aa).

Belongs to the NusB family.

In terms of biological role, involved in transcription antitermination. Required for transcription of ribosomal RNA (rRNA) genes. Binds specifically to the boxA antiterminator sequence of the ribosomal RNA (rrn) operons. The chain is Transcription antitermination protein NusB from Sulfurimonas denitrificans (strain ATCC 33889 / DSM 1251) (Thiomicrospira denitrificans (strain ATCC 33889 / DSM 1251)).